The chain runs to 138 residues: Small ribosomal subunit protein uS11 (138 aa).

The span at 1-12 shows a compositional bias: low complexity; that stretch reads MAQAKKGGTAAK. 2 disordered regions span residues 1 to 32 and 119 to 138; these read MAQA…AAHI and ISDV…RRRV. Over residues 13–22 the composition is skewed to basic residues; it reads KGQKTRRREK.

Belongs to the universal ribosomal protein uS11 family. Part of the 30S ribosomal subunit. Interacts with proteins S7 and S18. Binds to IF-3.

Its function is as follows. Located on the platform of the 30S subunit, it bridges several disparate RNA helices of the 16S rRNA. Forms part of the Shine-Dalgarno cleft in the 70S ribosome. The chain is Small ribosomal subunit protein uS11 from Mycolicibacterium smegmatis (strain ATCC 700084 / mc(2)155) (Mycobacterium smegmatis).